Consider the following 284-residue polypeptide: Pantothenate synthetase (284 aa).

32 to 39 (MGALHEGH) serves as a coordination point for ATP. The active-site Proton donor is the histidine 39. Glutamine 63 contributes to the (R)-pantoate binding site. Glutamine 63 serves as a coordination point for beta-alanine. Residue 149 to 152 (GEKD) participates in ATP binding. Glutamine 155 is a binding site for (R)-pantoate. ATP-binding positions include valine 178 and 186–189 (LSSR).

Belongs to the pantothenate synthetase family. In terms of assembly, homodimer.

It localises to the cytoplasm. The catalysed reaction is (R)-pantoate + beta-alanine + ATP = (R)-pantothenate + AMP + diphosphate + H(+). It participates in cofactor biosynthesis; (R)-pantothenate biosynthesis; (R)-pantothenate from (R)-pantoate and beta-alanine: step 1/1. In terms of biological role, catalyzes the condensation of pantoate with beta-alanine in an ATP-dependent reaction via a pantoyl-adenylate intermediate. The polypeptide is Pantothenate synthetase (Chelativorans sp. (strain BNC1)).